Consider the following 366-residue polypeptide: tRNA/tmRNA (uracil-C(5))-methyltransferase (366 aa).

S-adenosyl-L-methionine contacts are provided by Gln-187, Tyr-215, Asn-220, Glu-236, and Asp-297. Cys-322 acts as the Nucleophile in catalysis. Glu-356 functions as the Proton acceptor in the catalytic mechanism.

It belongs to the class I-like SAM-binding methyltransferase superfamily. RNA M5U methyltransferase family. TrmA subfamily.

The enzyme catalyses uridine(54) in tRNA + S-adenosyl-L-methionine = 5-methyluridine(54) in tRNA + S-adenosyl-L-homocysteine + H(+). The catalysed reaction is uridine(341) in tmRNA + S-adenosyl-L-methionine = 5-methyluridine(341) in tmRNA + S-adenosyl-L-homocysteine + H(+). Functionally, dual-specificity methyltransferase that catalyzes the formation of 5-methyluridine at position 54 (m5U54) in all tRNAs, and that of position 341 (m5U341) in tmRNA (transfer-mRNA). This chain is tRNA/tmRNA (uracil-C(5))-methyltransferase, found in Marinomonas sp. (strain MWYL1).